The following is a 382-amino-acid chain: Trophoblast glycoprotein-like (382 aa).

Positions M1–P26 are cleaved as a signal peptide. 2 disulfides stabilise this stretch: C27–C33 and C31–C43. The Extracellular portion of the chain corresponds to C27–S307. LRR repeat units lie at residues P57–G80, L93–G116, L117–G140, L171–L194, and R196–A217. Residue N62 is glycosylated (N-linked (GlcNAc...) asparagine). 2 disulfides stabilise this stretch: C238/C264 and C240/C285. The helical transmembrane segment at Y308–L328 threads the bilayer. At N329–L382 the chain is on the cytoplasmic side. The disordered stretch occupies residues D358–L382. Low complexity predominate over residues P365–L382.

The protein localises to the membrane. The polypeptide is Trophoblast glycoprotein-like (TPBGL) (Homo sapiens (Human)).